A 639-amino-acid chain; its full sequence is Chaperone protein DnaK (639 aa).

At T198 the chain carries Phosphothreonine; by autocatalysis. Residues 602-639 (QAKSQAQGGDNADAGKQANATADDVVDAEFEEVKDDKK) are disordered. Residues 625–639 (DVVDAEFEEVKDDKK) show a composition bias toward acidic residues.

Belongs to the heat shock protein 70 family.

Acts as a chaperone. The protein is Chaperone protein DnaK of Shewanella baltica (strain OS155 / ATCC BAA-1091).